Here is a 400-residue protein sequence, read N- to C-terminus: uncharacterized protein (400 aa).

A compositionally biased stretch (basic and acidic residues) spans 112–126 (SESTAQIEKKPRKPL). The interval 112 to 151 (SESTAQIEKKPRKPLDSVGLLEGDRNKRKKSPQMNDFNIK) is disordered.

This is an uncharacterized protein from Homo sapiens (Human).